Consider the following 106-residue polypeptide: Chaperone modulatory protein CbpM (106 aa).

It belongs to the CbpM family.

Functionally, interacts with CbpA and inhibits both the DnaJ-like co-chaperone activity and the DNA binding activity of CbpA. Together with CbpA, modulates the activity of the DnaK chaperone system. Does not inhibit the co-chaperone activity of DnaJ. This chain is Chaperone modulatory protein CbpM, found in Coxiella burnetii (strain CbuK_Q154) (Coxiella burnetii (strain Q154)).